The chain runs to 516 residues: NADH-quinone oxidoreductase subunit N (516 aa).

14 helical membrane passes run 12–32, 37–57, 81–101, 108–128, 131–151, 163–183, 213–233, 246–266, 274–294, 303–323, 341–361, 386–406, 419–439, and 491–511; these read LLPA…DLLV, VTIS…VLVG, LVAV…GPLL, VGEY…LGAA, LITL…LVGL, VTFF…AALL, VAVA…PFHA, VAAY…LAVV, ITGL…NLVA, LLAW…GALA, VAYT…VVAL, VGLA…AGLF, GAAG…AYYL, and VVLA…QLVL.

This sequence belongs to the complex I subunit 2 family. As to quaternary structure, NDH-1 is composed of 14 different subunits. Subunits NuoA, H, J, K, L, M, N constitute the membrane sector of the complex.

Its subcellular location is the cell membrane. It catalyses the reaction a quinone + NADH + 5 H(+)(in) = a quinol + NAD(+) + 4 H(+)(out). Its function is as follows. NDH-1 shuttles electrons from NADH, via FMN and iron-sulfur (Fe-S) centers, to quinones in the respiratory chain. The immediate electron acceptor for the enzyme in this species is believed to be a menaquinone. Couples the redox reaction to proton translocation (for every two electrons transferred, four hydrogen ions are translocated across the cytoplasmic membrane), and thus conserves the redox energy in a proton gradient. The polypeptide is NADH-quinone oxidoreductase subunit N (Salinispora tropica (strain ATCC BAA-916 / DSM 44818 / JCM 13857 / NBRC 105044 / CNB-440)).